Reading from the N-terminus, the 108-residue chain is Nucleoid-associated protein mma_2329 (108 aa).

It belongs to the YbaB/EbfC family. In terms of assembly, homodimer.

The protein resides in the cytoplasm. The protein localises to the nucleoid. Functionally, binds to DNA and alters its conformation. May be involved in regulation of gene expression, nucleoid organization and DNA protection. The polypeptide is Nucleoid-associated protein mma_2329 (Janthinobacterium sp. (strain Marseille) (Minibacterium massiliensis)).